The following is a 1081-amino-acid chain: Inversin (1081 aa).

ANK repeat units lie at residues Ser13–Asp42, Phe47–Lys76, Ser80–Lys110, Glu113–Thr144, Asn148–Ile177, Glu181–Leu213, Glu220–Ser250, Leu254–Ile283, Gln288–Asp317, Glu321–Ile350, Tyr356–Ala385, Met389–Leu418, Asp422–Val451, Ala455–Ile484, Glu488–Gln517, and Glu523–Ala553. A 3-hydroxyasparagine modification is found at Asn75. The D-box 1 signature appears at Arg490–Asn498. An IQ 1 domain is found at Gln555 to Lys584. Basic and acidic residues predominate over residues Arg589–Lys610. Positions Arg589 to Ser889 are disordered. Residues Arg638 to Ala649 show a composition bias toward polar residues. Basic and acidic residues-rich tracts occupy residues Lys688–Lys698, Glu724–Lys740, and Asp772–Ser785. Residues Ser863–Ala872 are compositionally biased toward polar residues. A D-box 2 motif is present at residues Arg910–Asn918. In terms of domain architecture, IQ 2 spans Lys917–Leu946. Residues Arg1022–Phe1050 form an ANK 17 repeat. The span at Ser1051–Lys1061 shows a compositional bias: polar residues. Residues Ser1051 to Ser1081 are disordered.

Binds calmodulin via its IQ domains. Interacts with APC2. Interacts with alpha-, beta-, and gamma-catenin. Interacts with N-cadherin (CDH2). Interacts with NPHP1. Interacts with DVL1, PRICKLE (PRICKLE1 or PRICKLE2) and Strabismus (VANGL1 or VANGL2). Component of a complex containing at least ANKS6, INVS, NEK8 and NPHP3. ANKS6 may organize complex assembly by linking INVS and NPHP3 to NEK8 and INVS may target the complex to the proximal ciliary axoneme. Interacts with IQCB1; the interaction likely requires additional interactors. Interacts with microtubules. Post-translationally, may be ubiquitinated via its interaction with APC2. In terms of processing, hydroxylated at Asn-75, most probably by HIF1AN.

It is found in the cytoplasm. Its subcellular location is the cytoskeleton. The protein localises to the membrane. It localises to the spindle. The protein resides in the nucleus. In terms of biological role, required for normal renal development and establishment of left-right axis. Probably acts as a molecular switch between different Wnt signaling pathways. Inhibits the canonical Wnt pathway by targeting cytoplasmic disheveled (DVL1) for degradation by the ubiquitin-proteasome. This suggests that it is required in renal development to oppose the repression of terminal differentiation of tubular epithelial cells by Wnt signaling. Involved in the organization of apical junctions in kidney cells together with NPHP1, NPHP4 and RPGRIP1L/NPHP8. Does not seem to be strictly required for ciliogenesis. The polypeptide is Inversin (INVS) (Canis lupus familiaris (Dog)).